Here is a 257-residue protein sequence, read N- to C-terminus: Zinc transporter ZupT (257 aa).

3 consecutive transmembrane segments (helical) span residues 5 to 25 (LILTILAGAATFIGAFLGVLG), 32 to 52 (LLAFSLGFAAGIMLLISLMEM), and 61 to 81 (GMSPVLGYGMFIFGLLGYFGL). Residues Asn-120 and Glu-123 each contribute to the Fe(2+) site. 2 residues coordinate Zn(2+): Glu-123 and His-148. The next 4 membrane-spanning stretches (helical) occupy residues 137–157 (LGFGIALAVALHNIPEGLAVA), 171–191 (ILWAGISGLAEILGGVLAWLI), 195–215 (MISPVVMAAIMAAVAGIMVAL), and 236–256 (GVLCGMSVMGFSLVLLQTAGI). Residues Asn-149, Glu-152, and Glu-181 each coordinate Fe(2+). Glu-152 serves as a coordination point for Zn(2+).

The protein belongs to the ZIP transporter (TC 2.A.5) family. ZupT subfamily.

The protein resides in the cell inner membrane. It catalyses the reaction Zn(2+)(in) = Zn(2+)(out). Its function is as follows. Mediates zinc uptake. May also transport other divalent cations. This chain is Zinc transporter ZupT, found in Escherichia coli O45:K1 (strain S88 / ExPEC).